The following is a 159-amino-acid chain: Ribosomal RNA large subunit methyltransferase H (159 aa).

S-adenosyl-L-methionine is bound by residues leucine 76, glycine 108, and 127–132 (FSKMTF).

Belongs to the RNA methyltransferase RlmH family. In terms of assembly, homodimer.

It localises to the cytoplasm. It catalyses the reaction pseudouridine(1915) in 23S rRNA + S-adenosyl-L-methionine = N(3)-methylpseudouridine(1915) in 23S rRNA + S-adenosyl-L-homocysteine + H(+). Its function is as follows. Specifically methylates the pseudouridine at position 1915 (m3Psi1915) in 23S rRNA. The sequence is that of Ribosomal RNA large subunit methyltransferase H from Bifidobacterium longum (strain DJO10A).